Consider the following 262-residue polypeptide: Small ribosomal subunit protein uS2 (262 aa).

Residues 225–262 (KQGEQLTEEAKPEDKEDEKGQAEEKEVKEENNSANKEE) are disordered. Over residues 232–262 (EEAKPEDKEDEKGQAEEKEVKEENNSANKEE) the composition is skewed to basic and acidic residues.

This sequence belongs to the universal ribosomal protein uS2 family.

The protein is Small ribosomal subunit protein uS2 of Halothermothrix orenii (strain H 168 / OCM 544 / DSM 9562).